We begin with the raw amino-acid sequence, 306 residues long: OVARIAN TUMOR DOMAIN-containing deubiquitinating enzyme 1 (306 aa).

The 215-residue stretch at 81 to 295 (IGIRRTRGDG…PGHYDILYPK (215 aa)) folds into the OTU domain. Asp-89 is an active-site residue. Cys-92 serves as the catalytic Nucleophile. Active-site residues include His-259 and His-288.

This sequence belongs to the peptidase C65 family.

The catalysed reaction is Thiol-dependent hydrolysis of ester, thioester, amide, peptide and isopeptide bonds formed by the C-terminal Gly of ubiquitin (a 76-residue protein attached to proteins as an intracellular targeting signal).. With respect to regulation, cleavage activities for 'Lys-48'- and 'Lys-63'-linked ubiquitin (UB) tetramers is inhibited by UB aldehyde and N-ethylmaleimide but not by the metalloprotease inhibitors 1,10-phenanthroline and EDTA, and the serine protease inhibitor phenylmethylsulfonyl fluoride. Functionally, hydrolase that can remove conjugated ubiquitin from proteins in vitro and may therefore play an important regulatory role at the level of protein turnover by preventing degradation. Cysteine protease with a preference for Met-1 and 'Lys-48' over 'Lys-63'-linked ubiquitin (UB) tetramers (e.g. Ub2, Ub3 and Ub4) as substrates. This is OVARIAN TUMOR DOMAIN-containing deubiquitinating enzyme 1 from Arabidopsis thaliana (Mouse-ear cress).